We begin with the raw amino-acid sequence, 447 residues long: GTPase Der (447 aa).

2 EngA-type G domains span residues lysine 4–glutamate 165 and leucine 180–asparagine 357. Residues glycine 10–serine 17, aspartate 57–leucine 61, asparagine 119–glutamate 122, glycine 186–serine 193, aspartate 233–leucine 237, and asparagine 298–aspartate 301 contribute to the GTP site. The KH-like domain maps to lysine 358–lysine 443.

The protein belongs to the TRAFAC class TrmE-Era-EngA-EngB-Septin-like GTPase superfamily. EngA (Der) GTPase family. In terms of assembly, associates with the 50S ribosomal subunit.

In terms of biological role, GTPase that plays an essential role in the late steps of ribosome biogenesis. In Rickettsia prowazekii (strain Madrid E), this protein is GTPase Der.